The primary structure comprises 145 residues: D-aminoacyl-tRNA deacylase (145 aa).

The short motif at 137–138 (GP) is the Gly-cisPro motif, important for rejection of L-amino acids element.

It belongs to the DTD family. In terms of assembly, homodimer.

Its subcellular location is the cytoplasm. It catalyses the reaction glycyl-tRNA(Ala) + H2O = tRNA(Ala) + glycine + H(+). The catalysed reaction is a D-aminoacyl-tRNA + H2O = a tRNA + a D-alpha-amino acid + H(+). An aminoacyl-tRNA editing enzyme that deacylates mischarged D-aminoacyl-tRNAs. Also deacylates mischarged glycyl-tRNA(Ala), protecting cells against glycine mischarging by AlaRS. Acts via tRNA-based rather than protein-based catalysis; rejects L-amino acids rather than detecting D-amino acids in the active site. By recycling D-aminoacyl-tRNA to D-amino acids and free tRNA molecules, this enzyme counteracts the toxicity associated with the formation of D-aminoacyl-tRNA entities in vivo and helps enforce protein L-homochirality. This is D-aminoacyl-tRNA deacylase from Ectopseudomonas mendocina (strain ymp) (Pseudomonas mendocina).